We begin with the raw amino-acid sequence, 1003 residues long: Retinoblastoma-related protein 1 (1003 aa).

The domain A stretch occupies residues 405–607; the sequence is TPVSTAMTTA…EKGSSMYNSL (203 aa). Residues 405-860 are pocket; the sequence is TPVSTAMTTA…NEMFIPSVKP (456 aa). Residues 608–729 are spacer; sequence AVAKPSLAAE…PGGGGETCAE (122 aa). A domain B region spans residues 730–860; sequence TAINVFFGKI…NEMFIPSVKP (131 aa). The segment at 868 to 899 is disordered; sequence AGNNSEKNDHNDGQGPASPKPSPFPKLPDMSP.

Belongs to the retinoblastoma protein (RB) family. As to expression, expressed in roots, stems, leaves and flowers.

Its subcellular location is the nucleus. In terms of biological role, regulator of biological processes that recruits a histone deacetylase to control gene transcription. Formation of stable complexes with geminiviridae replication-associated proteins may create a cellular environment which favors viral DNA replication. May play a role in the entry into mitosis, negatively regulating the cell proliferation during leaf, stem, and flower development. Critical regulator of the endocycle. In Nicotiana benthamiana, this protein is Retinoblastoma-related protein 1 (RBR1).